We begin with the raw amino-acid sequence, 429 residues long: Arrestin-related trafficking adapter 10 (429 aa).

It belongs to the ART10 family.

The protein resides in the cytoplasm. In terms of biological role, may regulate endocytosis by recruiting RSP5 ubiquitin ligase activity to specific plasma membrane proteins in response to extracellular stimuli. The polypeptide is Arrestin-related trafficking adapter 10 (ART10) (Lachancea thermotolerans (strain ATCC 56472 / CBS 6340 / NRRL Y-8284) (Yeast)).